The primary structure comprises 499 residues: Heparin cofactor 2 (499 aa).

A signal peptide spans 1 to 19 (MKHSLNALLIFLIITSAWG). The residue at position 37 (S37) is a Phosphoserine; by FAM20C. N49 carries N-linked (GlcNAc...) (complex) asparagine glycosylation. Residues 68–79 (DWIPEGEEDDDY) are chemotactic activity. Repeat copies occupy residues 73–83 (GEEDDDYLDLE) and 87–97 (SEDDDYIDIVD). The interval 73-97 (GEEDDDYLDLEKIFSEDDDYIDIVD) is 2 X 11 AA approximate repeats, Asp/Glu-rich (acidic) (hirudin-like). Residues Y79 and Y92 each carry the sulfotyrosine modification. N188 carries N-linked (GlcNAc...) asparagine glycosylation. The segment at 192–212 (KYEITTIHNLFRKLTHRLFRR) is glycosaminoglycan-binding site. The N-linked (GlcNAc...) asparagine glycan is linked to N387.

Belongs to the serpin family. In terms of processing, phosphorylated by FAM20C in the extracellular medium. In terms of tissue distribution, expressed predominantly in liver. Also present in plasma. As to expression, expressed in plasma (at protein level). Expressed in liver.

In terms of biological role, thrombin inhibitor activated by the glycosaminoglycans, heparin or dermatan sulfate. In the presence of the latter, HC-II becomes the predominant thrombin inhibitor in place of antithrombin III (AT-III). Also inhibits chymotrypsin, but in a glycosaminoglycan-independent manner. Its function is as follows. Peptides at the N-terminal of HC-II have chemotactic activity for both monocytes and neutrophils. Functionally, shows negligible inhibition, in vitro, of thrombin and tPA and no inhibition of factor Xa, in vitro. This Homo sapiens (Human) protein is Heparin cofactor 2 (SERPIND1).